The chain runs to 377 residues: Hydrogenase maturation factor HypD (377 aa).

Residues cysteine 41, cysteine 69, and cysteine 72 each contribute to the Fe cation site.

This sequence belongs to the HypD family. [4Fe-4S] cluster is required as a cofactor.

It functions in the pathway protein modification; [NiFe] hydrogenase maturation. Its function is as follows. Involved in the maturation of [NiFe] hydrogenases. Involved in the biosynthesis of the Fe(CN)(2)CO cofactor. In Rhodobacter capsulatus (Rhodopseudomonas capsulata), this protein is Hydrogenase maturation factor HypD.